The sequence spans 231 residues: ATP phosphoribosyltransferase (231 aa).

It belongs to the ATP phosphoribosyltransferase family. Short subfamily. In terms of assembly, heteromultimer composed of HisG and HisZ subunits.

The protein resides in the cytoplasm. The enzyme catalyses 1-(5-phospho-beta-D-ribosyl)-ATP + diphosphate = 5-phospho-alpha-D-ribose 1-diphosphate + ATP. It functions in the pathway amino-acid biosynthesis; L-histidine biosynthesis; L-histidine from 5-phospho-alpha-D-ribose 1-diphosphate: step 1/9. Catalyzes the condensation of ATP and 5-phosphoribose 1-diphosphate to form N'-(5'-phosphoribosyl)-ATP (PR-ATP). Has a crucial role in the pathway because the rate of histidine biosynthesis seems to be controlled primarily by regulation of HisG enzymatic activity. This is ATP phosphoribosyltransferase from Brucella suis biovar 1 (strain 1330).